A 285-amino-acid chain; its full sequence is 4-diphosphocytidyl-2-C-methyl-D-erythritol kinase (285 aa).

Residue lysine 10 is part of the active site. Proline 94–serine 104 serves as a coordination point for ATP. Aspartate 136 is a catalytic residue.

The protein belongs to the GHMP kinase family. IspE subfamily.

It carries out the reaction 4-CDP-2-C-methyl-D-erythritol + ATP = 4-CDP-2-C-methyl-D-erythritol 2-phosphate + ADP + H(+). Its pathway is isoprenoid biosynthesis; isopentenyl diphosphate biosynthesis via DXP pathway; isopentenyl diphosphate from 1-deoxy-D-xylulose 5-phosphate: step 3/6. Catalyzes the phosphorylation of the position 2 hydroxy group of 4-diphosphocytidyl-2C-methyl-D-erythritol. This Latilactobacillus sakei subsp. sakei (strain 23K) (Lactobacillus sakei subsp. sakei) protein is 4-diphosphocytidyl-2-C-methyl-D-erythritol kinase.